The primary structure comprises 293 residues: uncharacterized protein (293 aa).

Residues 65–89 (LQKYLENIKNKKLNLNKQSNNQTNN) are a coiled coil. The tract at residues 81 to 112 (KQSNNQTNNQTNNQTNNQTNNQTNNIRPQINN) is disordered.

The protein resides in the virion. This is an uncharacterized protein from Acanthamoeba polyphaga mimivirus (APMV).